We begin with the raw amino-acid sequence, 164 residues long: uncharacterized protein (164 aa).

The first 25 residues, 1 to 25 (MMKTVKHLLCCAIAASALISTGVHA), serve as a signal peptide directing secretion.

This is an uncharacterized protein from Escherichia coli (strain K12).